Here is an 89-residue protein sequence, read N- to C-terminus: Small ribosomal subunit protein uS15 (89 aa).

The protein belongs to the universal ribosomal protein uS15 family. In terms of assembly, part of the 30S ribosomal subunit. Forms a bridge to the 50S subunit in the 70S ribosome, contacting the 23S rRNA.

Its function is as follows. One of the primary rRNA binding proteins, it binds directly to 16S rRNA where it helps nucleate assembly of the platform of the 30S subunit by binding and bridging several RNA helices of the 16S rRNA. Functionally, forms an intersubunit bridge (bridge B4) with the 23S rRNA of the 50S subunit in the ribosome. In Shewanella denitrificans (strain OS217 / ATCC BAA-1090 / DSM 15013), this protein is Small ribosomal subunit protein uS15.